Here is a 93-residue protein sequence, read N- to C-terminus: RNA-binding protein Hfq (93 aa).

In terms of domain architecture, Sm spans 9 to 68; it reads DPFLNALRKERIPVSIFLVNGIKLQGQIESFDQYVVLLKNAVSQMVYKHAISTVVPARNP. The span at 74 to 86 shows a compositional bias: low complexity; the sequence is PAMAAGATAAPAA. Residues 74 to 93 form a disordered region; that stretch reads PAMAAGATAAPAADEGYGNQ.

This sequence belongs to the Hfq family. Homohexamer.

Its function is as follows. RNA chaperone that binds small regulatory RNA (sRNAs) and mRNAs to facilitate mRNA translational regulation in response to envelope stress, environmental stress and changes in metabolite concentrations. Also binds with high specificity to tRNAs. The protein is RNA-binding protein Hfq of Alcanivorax borkumensis (strain ATCC 700651 / DSM 11573 / NCIMB 13689 / SK2).